The sequence spans 197 residues: Nascent polypeptide-associated complex subunit alpha (197 aa).

A compositionally biased stretch (basic and acidic residues) spans 1–18; that stretch reads MTGSTETRHNEKDVKEPQ. The segment at 1 to 30 is disordered; the sequence is MTGSTETRHNEKDVKEPQVDSDADSDNEAI. The span at 19 to 28 shows a compositional bias: acidic residues; the sequence is VDSDADSDNE. The region spanning 58–123 is the NAC-A/B domain; the sequence is SRSEKKARKL…AKIEDLTQHA (66 aa). The tract at residues 134–155 is disordered; it reads TREAPQLKTVEEDDNEDVEEDS. The span at 144 to 155 shows a compositional bias: acidic residues; it reads EEDDNEDVEEDS. Residues 158 to 195 enclose the UBA domain; the sequence is IEEKDIELVISQANTTRNKAIRALKDADNDIVNAIMSL.

It belongs to the NAC-alpha family.

May promote appropriate targeting of ribosome-nascent polypeptide complexes. The chain is Nascent polypeptide-associated complex subunit alpha from Caenorhabditis briggsae.